A 161-amino-acid chain; its full sequence is Cytochrome c-type biogenesis protein CcmE (161 aa).

At 1 to 8 (MNPRRKKR) the chain is on the cytoplasmic side. The chain crosses the membrane as a helical; Signal-anchor for type II membrane protein span at residues 9-29 (LTLAVALIAGVAAVASLLLYA). Residues 30–161 (LNSNLNLFYT…TYNQKALEDK (132 aa)) are Periplasmic-facing. Residues His131 and Tyr135 each contribute to the heme site. The segment at 142–161 (EAMGQTHEKPTYNQKALEDK) is disordered. Residues 147–161 (THEKPTYNQKALEDK) are compositionally biased toward basic and acidic residues.

This sequence belongs to the CcmE/CycJ family.

It localises to the cell inner membrane. Functionally, heme chaperone required for the biogenesis of c-type cytochromes. Transiently binds heme delivered by CcmC and transfers the heme to apo-cytochromes in a process facilitated by CcmF and CcmH. The sequence is that of Cytochrome c-type biogenesis protein CcmE from Shewanella frigidimarina (strain NCIMB 400).